A 464-amino-acid chain; its full sequence is Phosphoglucosamine mutase (464 aa).

S112 serves as the catalytic Phosphoserine intermediate. Mg(2+) contacts are provided by S112, D252, D254, and D256. S112 carries the post-translational modification Phosphoserine.

This sequence belongs to the phosphohexose mutase family. The cofactor is Mg(2+). Activated by phosphorylation.

The catalysed reaction is alpha-D-glucosamine 1-phosphate = D-glucosamine 6-phosphate. In terms of biological role, catalyzes the conversion of glucosamine-6-phosphate to glucosamine-1-phosphate. The sequence is that of Phosphoglucosamine mutase from Synechococcus sp. (strain CC9902).